A 95-amino-acid polypeptide reads, in one-letter code: UPF0235 protein Swoo_1329 (95 aa).

This sequence belongs to the UPF0235 family.

This is UPF0235 protein Swoo_1329 from Shewanella woodyi (strain ATCC 51908 / MS32).